A 417-amino-acid chain; its full sequence is NADH-quinone oxidoreductase subunit D (417 aa).

The protein belongs to the complex I 49 kDa subunit family. NDH-1 is composed of 14 different subunits. Subunits NuoB, C, D, E, F, and G constitute the peripheral sector of the complex.

The protein localises to the cell inner membrane. The enzyme catalyses a quinone + NADH + 5 H(+)(in) = a quinol + NAD(+) + 4 H(+)(out). Its function is as follows. NDH-1 shuttles electrons from NADH, via FMN and iron-sulfur (Fe-S) centers, to quinones in the respiratory chain. The immediate electron acceptor for the enzyme in this species is believed to be ubiquinone. Couples the redox reaction to proton translocation (for every two electrons transferred, four hydrogen ions are translocated across the cytoplasmic membrane), and thus conserves the redox energy in a proton gradient. The sequence is that of NADH-quinone oxidoreductase subunit D from Herminiimonas arsenicoxydans.